Reading from the N-terminus, the 332-residue chain is 5-dehydro-2-deoxygluconokinase (332 aa).

Belongs to the carbohydrate kinase PfkB family.

The enzyme catalyses 5-dehydro-2-deoxy-D-gluconate + ATP = 6-phospho-5-dehydro-2-deoxy-D-gluconate + ADP + H(+). It functions in the pathway polyol metabolism; myo-inositol degradation into acetyl-CoA; acetyl-CoA from myo-inositol: step 5/7. In terms of biological role, catalyzes the phosphorylation of 5-dehydro-2-deoxy-D-gluconate (2-deoxy-5-keto-D-gluconate or DKG) to 6-phospho-5-dehydro-2-deoxy-D-gluconate (DKGP). This Bacillus thuringiensis subsp. konkukian (strain 97-27) protein is 5-dehydro-2-deoxygluconokinase.